A 245-amino-acid chain; its full sequence is Ubiquinone/menaquinone biosynthesis C-methyltransferase UbiE (245 aa).

Residues Thr-71, Asp-92, and 118-119 each bind S-adenosyl-L-methionine; that span reads DA.

This sequence belongs to the class I-like SAM-binding methyltransferase superfamily. MenG/UbiE family.

It carries out the reaction a 2-demethylmenaquinol + S-adenosyl-L-methionine = a menaquinol + S-adenosyl-L-homocysteine + H(+). The catalysed reaction is a 2-methoxy-6-(all-trans-polyprenyl)benzene-1,4-diol + S-adenosyl-L-methionine = a 5-methoxy-2-methyl-3-(all-trans-polyprenyl)benzene-1,4-diol + S-adenosyl-L-homocysteine + H(+). It participates in quinol/quinone metabolism; menaquinone biosynthesis; menaquinol from 1,4-dihydroxy-2-naphthoate: step 2/2. The protein operates within cofactor biosynthesis; ubiquinone biosynthesis. Methyltransferase required for the conversion of demethylmenaquinol (DMKH2) to menaquinol (MKH2) and the conversion of 2-polyprenyl-6-methoxy-1,4-benzoquinol (DDMQH2) to 2-polyprenyl-3-methyl-6-methoxy-1,4-benzoquinol (DMQH2). The sequence is that of Ubiquinone/menaquinone biosynthesis C-methyltransferase UbiE from Neisseria meningitidis serogroup C / serotype 2a (strain ATCC 700532 / DSM 15464 / FAM18).